The chain runs to 482 residues: Bifunctional protein GlmU (482 aa).

The segment at 1 to 241 (MTASTEAAVV…SALVTGVNDR (241 aa)) is pyrophosphorylase. UDP-N-acetyl-alpha-D-glucosamine is bound by residues 12–15 (LAAG), Lys26, Gln83, 88–89 (GT), 112–114 (SGD), Gly151, Glu166, Asn181, and Asn239. Asp114 contacts Mg(2+). Asn239 contributes to the Mg(2+) binding site. The segment at 242 to 262 (VQLSDLGKVLNRRIVAAHQRA) is linker. An N-acetyltransferase region spans residues 263–482 (GVTIIDPGST…AARKALGDES (220 aa)). Positions 344 and 362 each coordinate UDP-N-acetyl-alpha-D-glucosamine. The Proton acceptor role is filled by His374. UDP-N-acetyl-alpha-D-glucosamine-binding residues include Tyr377 and Asn388. Acetyl-CoA-binding positions include Ala391, 397–398 (NY), Ser416, and Ala434. Positions 463 to 482 (KKRPGSAADKAARKALGDES) are disordered. Over residues 472–482 (KAARKALGDES) the composition is skewed to basic and acidic residues.

It in the N-terminal section; belongs to the N-acetylglucosamine-1-phosphate uridyltransferase family. The protein in the C-terminal section; belongs to the transferase hexapeptide repeat family. In terms of assembly, homotrimer. It depends on Mg(2+) as a cofactor.

It is found in the cytoplasm. It carries out the reaction alpha-D-glucosamine 1-phosphate + acetyl-CoA = N-acetyl-alpha-D-glucosamine 1-phosphate + CoA + H(+). The enzyme catalyses N-acetyl-alpha-D-glucosamine 1-phosphate + UTP + H(+) = UDP-N-acetyl-alpha-D-glucosamine + diphosphate. It functions in the pathway nucleotide-sugar biosynthesis; UDP-N-acetyl-alpha-D-glucosamine biosynthesis; N-acetyl-alpha-D-glucosamine 1-phosphate from alpha-D-glucosamine 6-phosphate (route II): step 2/2. It participates in nucleotide-sugar biosynthesis; UDP-N-acetyl-alpha-D-glucosamine biosynthesis; UDP-N-acetyl-alpha-D-glucosamine from N-acetyl-alpha-D-glucosamine 1-phosphate: step 1/1. Its pathway is bacterial outer membrane biogenesis; LPS lipid A biosynthesis. Functionally, catalyzes the last two sequential reactions in the de novo biosynthetic pathway for UDP-N-acetylglucosamine (UDP-GlcNAc). The C-terminal domain catalyzes the transfer of acetyl group from acetyl coenzyme A to glucosamine-1-phosphate (GlcN-1-P) to produce N-acetylglucosamine-1-phosphate (GlcNAc-1-P), which is converted into UDP-GlcNAc by the transfer of uridine 5-monophosphate (from uridine 5-triphosphate), a reaction catalyzed by the N-terminal domain. This is Bifunctional protein GlmU from Mycolicibacterium smegmatis (strain ATCC 700084 / mc(2)155) (Mycobacterium smegmatis).